Consider the following 375-residue polypeptide: 4,4'-diaponeurosporenoate glycosyltransferase (375 aa).

Helical transmembrane passes span 3–23, 164–184, 277–297, and 330–350; these read WLSR…ALIF, FYEG…NVFS, IMTA…GLCL, and FSNL…KIFI.

The protein belongs to the glycosyltransferase 2 family. CrtQ subfamily.

It localises to the cell membrane. It functions in the pathway carotenoid biosynthesis; staphyloxanthin biosynthesis; staphyloxanthin from farnesyl diphosphate: step 4/5. Its function is as follows. Catalyzes the glycosylation of 4,4'-diaponeurosporenoate, i.e. the esterification of glucose at the C1'' position with the carboxyl group of 4,4'-diaponeurosporenic acid, to form glycosyl-4,4'-diaponeurosporenoate. This is a step in the biosynthesis of staphyloxanthin, an orange pigment present in most staphylococci strains. The protein is 4,4'-diaponeurosporenoate glycosyltransferase (crtQ) of Staphylococcus aureus (strain Mu50 / ATCC 700699).